The chain runs to 215 residues: Cytochrome b6 (215 aa).

A helical transmembrane segment spans residues 32–52 (IFHCLGGITLTCFLVQVATGF). Residue cysteine 35 coordinates heme c. The heme b site is built by histidine 86 and histidine 100. 3 consecutive transmembrane segments (helical) span residues 90-110 (ASMM…TGGF), 116-136 (LTWV…VTGY), and 186-206 (LHTF…FSMI). Heme b is bound by residues histidine 187 and histidine 202.

Belongs to the cytochrome b family. PetB subfamily. In terms of assembly, the 4 large subunits of the cytochrome b6-f complex are cytochrome b6, subunit IV (17 kDa polypeptide, PetD), cytochrome f and the Rieske protein, while the 4 small subunits are PetG, PetL, PetM and PetN. The complex functions as a dimer. The cofactor is heme b. Heme c is required as a cofactor.

The protein localises to the plastid. The protein resides in the chloroplast thylakoid membrane. In terms of biological role, component of the cytochrome b6-f complex, which mediates electron transfer between photosystem II (PSII) and photosystem I (PSI), cyclic electron flow around PSI, and state transitions. The protein is Cytochrome b6 of Nymphaea alba (White water-lily).